The chain runs to 323 residues: tRNA dimethylallyltransferase (323 aa).

12–19 provides a ligand contact to ATP; the sequence is GPTASGKT. Position 14–19 (14–19) interacts with substrate; the sequence is TASGKT. Interaction with substrate tRNA stretches follow at residues 37-40 and 161-165; these read DSAL and QRLVR.

It belongs to the IPP transferase family. Monomer. It depends on Mg(2+) as a cofactor.

It catalyses the reaction adenosine(37) in tRNA + dimethylallyl diphosphate = N(6)-dimethylallyladenosine(37) in tRNA + diphosphate. Catalyzes the transfer of a dimethylallyl group onto the adenine at position 37 in tRNAs that read codons beginning with uridine, leading to the formation of N6-(dimethylallyl)adenosine (i(6)A). This is tRNA dimethylallyltransferase from Stutzerimonas stutzeri (strain A1501) (Pseudomonas stutzeri).